Reading from the N-terminus, the 190-residue chain is Vespryn-21 (190 aa).

An N-terminal signal peptide occupies residues 1–20 (MLLFTLCFFADLENGGKALA). The 107-residue stretch at 21–127 (SPPGKWQKAD…LIWQRGLWFL (107 aa)) folds into the B30.2/SPRY domain. Residues 128-190 (QRLETDSDKL…LGGGVSLTNL (63 aa)) constitute a propeptide that is removed on maturation.

Belongs to the ohanin/vespryn family. Expressed by the venom gland.

Its subcellular location is the secreted. Functionally, neurotoxin that produces dose-dependent hypolocomotion and hyperalgesia in mice. May directly act on the central nervous system, as it is 6500-fold more potent when administered intracerebroventricularly than intraperitoneal. The chain is Vespryn-21 from Drysdalia coronoides (White-lipped snake).